The chain runs to 170 residues: Acireductone dioxygenase (170 aa).

Residues histidine 99, histidine 101, glutamate 105, and histidine 144 each contribute to the Fe(2+) site. Residues histidine 99, histidine 101, glutamate 105, and histidine 144 each coordinate Ni(2+).

The protein belongs to the acireductone dioxygenase (ARD) family. In terms of assembly, monomer. Requires Fe(2+) as cofactor. It depends on Ni(2+) as a cofactor.

The enzyme catalyses 1,2-dihydroxy-5-(methylsulfanyl)pent-1-en-3-one + O2 = 3-(methylsulfanyl)propanoate + CO + formate + 2 H(+). The catalysed reaction is 1,2-dihydroxy-5-(methylsulfanyl)pent-1-en-3-one + O2 = 4-methylsulfanyl-2-oxobutanoate + formate + 2 H(+). Its pathway is amino-acid biosynthesis; L-methionine biosynthesis via salvage pathway; L-methionine from S-methyl-5-thio-alpha-D-ribose 1-phosphate: step 5/6. Catalyzes 2 different reactions between oxygen and the acireductone 1,2-dihydroxy-3-keto-5-methylthiopentene (DHK-MTPene) depending upon the metal bound in the active site. Fe-containing acireductone dioxygenase (Fe-ARD) produces formate and 2-keto-4-methylthiobutyrate (KMTB), the alpha-ketoacid precursor of methionine in the methionine recycle pathway. Ni-containing acireductone dioxygenase (Ni-ARD) produces methylthiopropionate, carbon monoxide and formate, and does not lie on the methionine recycle pathway. The protein is Acireductone dioxygenase of Bacillus cereus (strain ZK / E33L).